We begin with the raw amino-acid sequence, 470 residues long: UDP-N-acetylmuramate--L-alanine ligase (470 aa).

118 to 124 (GTHGKTT) contributes to the ATP binding site.

This sequence belongs to the MurCDEF family.

It is found in the cytoplasm. It catalyses the reaction UDP-N-acetyl-alpha-D-muramate + L-alanine + ATP = UDP-N-acetyl-alpha-D-muramoyl-L-alanine + ADP + phosphate + H(+). It functions in the pathway cell wall biogenesis; peptidoglycan biosynthesis. Its function is as follows. Cell wall formation. The sequence is that of UDP-N-acetylmuramate--L-alanine ligase from Cereibacter sphaeroides (strain KD131 / KCTC 12085) (Rhodobacter sphaeroides).